Consider the following 239-residue polypeptide: Putative 3-methyladenine DNA glycosylase (239 aa).

It belongs to the DNA glycosylase MPG family.

This is Putative 3-methyladenine DNA glycosylase from Pseudomonas aeruginosa (strain ATCC 15692 / DSM 22644 / CIP 104116 / JCM 14847 / LMG 12228 / 1C / PRS 101 / PAO1).